Reading from the N-terminus, the 699-residue chain is tRNA(Met) cytidine acetyltransferase TmcA (699 aa).

ATP is bound by residues Gln179, 201–210 (GRGKSTLAGM), and Arg323. The N-acetyltransferase domain maps to 359–543 (IEIPLYEQRD…SGCYTAMALL (185 aa)). Acetyl-CoA-binding positions include 471–473 (VAV), Glu511, and Arg518.

This sequence belongs to the RNA cytidine acetyltransferase family. TmcA subfamily.

The protein resides in the cytoplasm. It carries out the reaction cytidine(34) in elongator tRNA(Met) + acetyl-CoA + ATP + H2O = N(4)-acetylcytidine(34) in elongator tRNA(Met) + ADP + phosphate + CoA + H(+). Its function is as follows. Catalyzes the formation of N(4)-acetylcytidine (ac(4)C) at the wobble position of tRNA(Met), by using acetyl-CoA as an acetyl donor and ATP (or GTP). This Yersinia pestis (strain D106004) protein is tRNA(Met) cytidine acetyltransferase TmcA.